A 274-amino-acid polypeptide reads, in one-letter code: Aspartate/glutamate leucyltransferase (274 aa).

Belongs to the R-transferase family. Bpt subfamily.

The protein localises to the cytoplasm. It carries out the reaction N-terminal L-glutamyl-[protein] + L-leucyl-tRNA(Leu) = N-terminal L-leucyl-L-glutamyl-[protein] + tRNA(Leu) + H(+). It catalyses the reaction N-terminal L-aspartyl-[protein] + L-leucyl-tRNA(Leu) = N-terminal L-leucyl-L-aspartyl-[protein] + tRNA(Leu) + H(+). Functionally, functions in the N-end rule pathway of protein degradation where it conjugates Leu from its aminoacyl-tRNA to the N-termini of proteins containing an N-terminal aspartate or glutamate. This chain is Aspartate/glutamate leucyltransferase, found in Ruegeria sp. (strain TM1040) (Silicibacter sp.).